A 419-amino-acid chain; its full sequence is Elongation factor Tu, chloroplastic (419 aa).

A tr-type G domain is found at 10–214 (KPHVNIGTIG…TVDEHIPTPK (205 aa)). The G1 stretch occupies residues 19-26 (GHVDHGKT). 19–26 (GHVDHGKT) contacts GTP. Residue threonine 26 coordinates Mg(2+). The segment at 60-64 (GITIN) is G2. The tract at residues 81–84 (DCPG) is G3. GTP contacts are provided by residues 81 to 85 (DCPGH) and 136 to 139 (NKAD). Residues 136–139 (NKAD) form a G4 region. The tract at residues 174–176 (SAL) is G5.

It belongs to the TRAFAC class translation factor GTPase superfamily. Classic translation factor GTPase family. EF-Tu/EF-1A subfamily.

It localises to the plastid. The protein localises to the chloroplast. The enzyme catalyses GTP + H2O = GDP + phosphate + H(+). In terms of biological role, GTP hydrolase that promotes the GTP-dependent binding of aminoacyl-tRNA to the A-site of ribosomes during protein biosynthesis. This is Elongation factor Tu, chloroplastic (tufA) from Stigeoclonium helveticum (Green alga).